The primary structure comprises 602 residues: Elongation factor 4 (602 aa).

Residues 8-189 (KNIRNFSIIA…KIITTIPAPS (182 aa)) form the tr-type G domain. GTP contacts are provided by residues 20 to 25 (DHGKST) and 136 to 139 (NKID).

The protein belongs to the TRAFAC class translation factor GTPase superfamily. Classic translation factor GTPase family. LepA subfamily.

It localises to the cell inner membrane. The enzyme catalyses GTP + H2O = GDP + phosphate + H(+). Functionally, required for accurate and efficient protein synthesis under certain stress conditions. May act as a fidelity factor of the translation reaction, by catalyzing a one-codon backward translocation of tRNAs on improperly translocated ribosomes. Back-translocation proceeds from a post-translocation (POST) complex to a pre-translocation (PRE) complex, thus giving elongation factor G a second chance to translocate the tRNAs correctly. Binds to ribosomes in a GTP-dependent manner. This Helicobacter pylori (strain Shi470) protein is Elongation factor 4.